A 334-amino-acid polypeptide reads, in one-letter code: Probable 2-ketogluconate reductase (334 aa).

NAD(+) is bound by residues 164-165, 244-246, and Asp270; these read RI and AGR. The active site involves Arg246. Glu275 is an active-site residue. His294 (proton donor) is an active-site residue. Residue 294–297 coordinates NAD(+); sequence HIGT.

This sequence belongs to the D-isomer specific 2-hydroxyacid dehydrogenase family.

Its subcellular location is the cytoplasm. The enzyme catalyses D-gluconate + NADP(+) = 2-dehydro-D-gluconate + NADPH + H(+). In terms of biological role, catalyzes the NADPH-dependent reduction of 2,5-diketo-D-gluconate (25DKG) to 5-keto-D-gluconate (5KDG), 2-keto-D-gluconate (2KDG) to D-gluconate, and 2-keto-L-gulonate (2KLG) to L-idonate (IA). The chain is Probable 2-ketogluconate reductase (tkrA) from Dictyostelium discoideum (Social amoeba).